The sequence spans 3255 residues: Genome polyprotein (3255 aa).

The region spanning Val-292–Tyr-437 is the Peptidase S30 domain. Residues His-345, Asp-354, and Ser-388 each act as for P1 proteinase activity in the active site. The short motif at Lys-489–Cys-492 is the Involved in interaction with stylet and aphid transmission element. An Involved in virions binding and aphid transmission motif is present at residues Pro-747–Lys-749. One can recognise a Peptidase C6 domain in the interval Met-773–Gly-895. Residues Cys-781 and His-854 each act as for helper component proteinase activity in the active site. The 153-residue stretch at Glu-1397–Glu-1549 folds into the Helicase ATP-binding domain. Residue Gly-1410 to Ser-1417 participates in ATP binding. The short motif at Asp-1499–His-1502 is the DECH box element. The Helicase C-terminal domain occupies Asp-1568–Ser-1727. Residues Glu-2062–Lys-2069 carry the Nuclear localization signal motif. O-(5'-phospho-RNA)-tyrosine is present on Tyr-2084. The region spanning Ser-2215–Asn-2433 is the Peptidase C4 domain. Active-site for nuclear inclusion protein A activity residues include His-2260, Asp-2295, and Cys-2365. A RdRp catalytic domain is found at Trp-2699–Leu-2823. The interval Ala-2980–Lys-3028 is disordered. The segment covering Lys-2989–Ile-3005 has biased composition (basic and acidic residues). Position 3237 is a phosphothreonine (Thr-3237).

The protein belongs to the potyviridae genome polyprotein family. Interacts with host eIF4E protein (via cap-binding region); this interaction mediates the translation of the VPg-viral RNA conjugates. Part of a complex that comprises VPg, RNA, host EIF4E and EIF4G; this interaction mediates the translation of the VPg-viral RNA conjugates. VPg is uridylylated by the polymerase and is covalently attached to the 5'-end of the genomic RNA. This uridylylated form acts as a nucleotide-peptide primer for the polymerase. In terms of processing, potyviral RNA is expressed as two polyproteins which undergo post-translational proteolytic processing. Genome polyprotein is processed by NIa-pro, P1 and HC-pro proteinases resulting in the production of at least ten individual proteins. P3N-PIPO polyprotein is cleaved by P1 and HC-pro proteinases resulting in the production of three individual proteins. The P1 proteinase and the HC-pro cleave only their respective C-termini autocatalytically. 6K1 is essential for proper proteolytic separation of P3 from CI.

It localises to the host cytoplasmic vesicle. Its subcellular location is the host nucleus. The protein localises to the virion. The catalysed reaction is RNA(n) + a ribonucleoside 5'-triphosphate = RNA(n+1) + diphosphate. The enzyme catalyses Hydrolyzes glutaminyl bonds, and activity is further restricted by preferences for the amino acids in P6 - P1' that vary with the species of potyvirus, e.g. Glu-Xaa-Xaa-Tyr-Xaa-Gln-|-(Ser or Gly) for the enzyme from tobacco etch virus. The natural substrate is the viral polyprotein, but other proteins and oligopeptides containing the appropriate consensus sequence are also cleaved.. It carries out the reaction Hydrolyzes a Gly-|-Gly bond at its own C-terminus, commonly in the sequence -Tyr-Xaa-Val-Gly-|-Gly, in the processing of the potyviral polyprotein.. Functionally, required for aphid transmission and also has proteolytic activity. Only cleaves a Gly-Gly dipeptide at its own C-terminus. Interacts with virions and aphid stylets. Acts as a suppressor of RNA-mediated gene silencing, also known as post-transcriptional gene silencing (PTGS), a mechanism of plant viral defense that limits the accumulation of viral RNAs. May have RNA-binding activity. Has helicase activity. It may be involved in replication. Its function is as follows. Indispensable for virus replication. Reduces the abundance of host transcripts related to jasmonic acid biosynthesis therefore altering the host defenses. In order to increase its own stability, decreases host protein degradation pathways. In terms of biological role, indispensable for virus replication. Functionally, mediates the cap-independent, EIF4E-dependent translation of viral genomic RNAs. Binds to the cap-binding site of host EIF4E and thus interferes with the host EIF4E-dependent mRNA export and translation. VPg-RNA directly binds EIF4E and is a template for transcription. Also forms trimeric complexes with EIF4E-EIF4G, which are templates for translation. Has RNA-binding and proteolytic activities. Its function is as follows. An RNA-dependent RNA polymerase that plays an essential role in the virus replication. In terms of biological role, involved in aphid transmission, cell-to-cell and systemis movement, encapsidation of the viral RNA and in the regulation of viral RNA amplification. The polypeptide is Genome polyprotein (Lettuce mosaic virus (strain 0 / isolate French) (LMV)).